A 203-amino-acid chain; its full sequence is Putative 3-methyladenine DNA glycosylase (203 aa).

It belongs to the DNA glycosylase MPG family.

This is Putative 3-methyladenine DNA glycosylase from Staphylococcus saprophyticus subsp. saprophyticus (strain ATCC 15305 / DSM 20229 / NCIMB 8711 / NCTC 7292 / S-41).